A 561-amino-acid polypeptide reads, in one-letter code: Putative transport protein YbjL (561 aa).

Transmembrane regions (helical) follow at residues 8–28 (LLNGNYILLLFVVLALGLCLG), 32–52 (LGSIQLGNSIGVLVVSLLLGQ), 66–86 (FMLFIFCVGVEAGPNFFSIFF), 94–114 (MLALVMVGSALVIALGLGKLF), and 158–178 (NLSLGYALTYLIGLVSLIVGA). RCK C-terminal domains follow at residues 200-288 (RGLD…SFRN) and 292-373 (VFDR…RIGF). The next 5 membrane-spanning stretches (helical) occupy residues 383–403 (LLAFCAFFVIGLMIGMITFQF), 406–426 (FSFGMGNAAGLLFAGIMLGFM), 451–471 (VFMAGVGLSAGSGINNGLGAI), 475–495 (MLIAGLIVSLVPVVICFLFGA), and 540–560 (AIANVLLTLAGTIIVMVWPGL).

The protein belongs to the AAE transporter (TC 2.A.81) family. YbjL subfamily.

Its subcellular location is the cell membrane. The protein is Putative transport protein YbjL of Escherichia coli O139:H28 (strain E24377A / ETEC).